Reading from the N-terminus, the 177-residue chain is Glutamyl-tRNA(Gln) amidotransferase subunit F, mitochondrial (177 aa).

The N-terminal 16 residues, 1-16, are a transit peptide targeting the mitochondrion; the sequence is MIRINSRGLTVSTRRF. The disordered stretch occupies residues 148–177; it reads PAKGETQGSFNVANMNPRNRPFATIRSKQG. The segment covering 153 to 164 has biased composition (polar residues); the sequence is TQGSFNVANMNP.

It belongs to the GatF family. In terms of assembly, subunit of the heterotrimeric GatFAB amidotransferase (AdT) complex, composed of A, B and F subunits.

Its subcellular location is the mitochondrion inner membrane. The enzyme catalyses L-glutamyl-tRNA(Gln) + L-glutamine + ATP + H2O = L-glutaminyl-tRNA(Gln) + L-glutamate + ADP + phosphate + H(+). Allows the formation of correctly charged Gln-tRNA(Gln) through the transamidation of misacylated Glu-tRNA(Gln) in the mitochondria. The reaction takes place in the presence of glutamine and ATP through an activated gamma-phospho-Glu-tRNA(Gln). Required for proper protein synthesis within the mitochondrion. This Scheffersomyces stipitis (strain ATCC 58785 / CBS 6054 / NBRC 10063 / NRRL Y-11545) (Yeast) protein is Glutamyl-tRNA(Gln) amidotransferase subunit F, mitochondrial.